The sequence spans 399 residues: Sphingosine-1-phosphate phosphatase 2 (399 aa).

4 helical membrane passes run 88-108 (YLFQFSAALGQEVFYITFLPF), 121-141 (LIIIWVLVMYIGQVAKDVLKW), 160-180 (YGMPSTHAMAATAIAFTLLIS), and 185-205 (YQYPFVLGLVMAVVFSTLVCL). The interval 136-144 (KDVLKWPRP) is phosphatase sequence motif I. The segment at 163 to 166 (PSTH) is phosphatase sequence motif II. H166 functions as the Proton donor in the catalytic mechanism. A phosphatase sequence motif III region spans residues 206 to 217 (SRLYTGMHTVLD). H213 (nucleophile) is an active-site residue. The next 5 helical transmembrane spans lie at 219-239 (LGGVLITALLIVLTYPAWTFI), 247-267 (PLFPVCVIVVPFFLCYNYPVS), 280-300 (ILAAGAGVTIGFWINHFFQLV), 318-338 (TYMLVLGLTKFAVGIVLILLV), and 371-391 (VPYKFVTYTSVGICATTFVPM).

The protein belongs to the type 2 lipid phosphate phosphatase family. In terms of tissue distribution, expressed strongly in kidney and heart, followed by brain, colon, small intestine and lung. Not detected in skeletal muscle, thymus, spleen, liver, placenta, and peripheral blood leukocytes.

Its subcellular location is the endoplasmic reticulum membrane. The enzyme catalyses sphinganine 1-phosphate + H2O = sphinganine + phosphate. It catalyses the reaction sphing-4-enine 1-phosphate + H2O = sphing-4-enine + phosphate. It carries out the reaction (4R)-hydroxysphinganine 1-phosphate + H2O = (4R)-hydroxysphinganine + phosphate. Has specific phosphohydrolase activity towards sphingoid base 1-phosphates. Has high phosphohydrolase activity against dihydrosphingosine-1-phosphate and sphingosine-1-phosphate (S1P) in vitro. Sphingosine-1-phosphate phosphatase activity is needed for efficient recycling of sphingosine into the sphingolipid synthesis pathway. May play a role in attenuating intracellular sphingosine 1-phosphate (S1P) signaling. May play a role in pro-inflammatory signaling. Plays a role in the regulation of pancreatic islet beta-cell endoplasmic reticulum stress and proliferation. In Homo sapiens (Human), this protein is Sphingosine-1-phosphate phosphatase 2.